Consider the following 610-residue polypeptide: Pheromone-processing carboxypeptidase KEX1 (610 aa).

An N-terminal signal peptide occupies residues 1-18 (MSRYFLLACTLALQCVAA). Topologically, residues 19 to 494 (SQEDYIVKDL…KEKPPKHHHS (476 aa)) are lumenal. N-linked (GlcNAc...) asparagine glycosylation is present at Asn68. Ser176 is a catalytic residue. Residues Asn192 and Asn196 are each glycosylated (N-linked (GlcNAc...) asparagine). Residue Asp371 is part of the active site. N-linked (GlcNAc...) asparagine glycosylation is found at Asn418 and Asn426. The active site involves His429. The tract at residues 469-491 (KFVEEKQDTDQNEEEEKEKPPKH) is disordered. The chain crosses the membrane as a helical span at residues 495-515 (LTFYVAEVAILAVLAYLLYSF). The Cytoplasmic portion of the chain corresponds to 516 to 610 (YKSFAKSRKS…QSDEEEFGHR (95 aa)).

The protein belongs to the peptidase S10 family.

The protein localises to the golgi apparatus. It localises to the trans-Golgi network membrane. It carries out the reaction Preferential release of a C-terminal arginine or lysine residue.. In terms of biological role, protease with a carboxypeptidase B-like function involved in the C-terminal processing of the lysine and arginine residues from protein precursors. Promotes cell fusion and is involved in the programmed cell death. The sequence is that of Pheromone-processing carboxypeptidase KEX1 (KEX1) from Ogataea parapolymorpha (strain ATCC 26012 / BCRC 20466 / JCM 22074 / NRRL Y-7560 / DL-1) (Yeast).